The chain runs to 241 residues: Homeobox protein TGIF2LX (241 aa).

Disordered regions lie at residues 1-56 (MEAA…PKGY) and 115-213 (RHGN…EYPD). Over residues 21 to 39 (AKTQSPAQDTSTVSRNSAD) the composition is skewed to polar residues. Positions 48-111 (EHTKKPKGYL…INARRRILPD (64 aa)) form a DNA-binding region, homeobox; TALE-type.

It belongs to the TALE/TGIF homeobox family.

It is found in the nucleus. Functionally, may have a transcription role in testis. The chain is Homeobox protein TGIF2LX (TGIF2LX) from Hylobates lar (Lar gibbon).